Reading from the N-terminus, the 662-residue chain is Bifunctional polymyxin resistance protein ArnA (662 aa).

The interval 1-307 (MTSKAVVFAY…ELGLVEGARL (307 aa)) is formyltransferase ArnAFT. Histidine 106 functions as the Proton donor; for formyltransferase activity in the catalytic mechanism. (6R)-10-formyltetrahydrofolate contacts are provided by residues arginine 116 and 138–142 (IERAD). The dehydrogenase ArnADH stretch occupies residues 316 to 662 (RRTRVLILGV…EALREREAQA (347 aa)). Residues aspartate 349 and 370 to 371 (DI) each bind NAD(+). Residues alanine 395, tyrosine 400, and 434–435 (TS) each bind UDP-alpha-D-glucuronate. Catalysis depends on glutamate 436, which acts as the Proton acceptor; for decarboxylase activity. UDP-alpha-D-glucuronate-binding positions include arginine 462, asparagine 493, 527-536 (RLVDGGAQKR), and tyrosine 614. Arginine 620 functions as the Proton donor; for decarboxylase activity in the catalytic mechanism.

It in the N-terminal section; belongs to the Fmt family. UDP-L-Ara4N formyltransferase subfamily. The protein in the C-terminal section; belongs to the NAD(P)-dependent epimerase/dehydratase family. UDP-glucuronic acid decarboxylase subfamily. Homohexamer, formed by a dimer of trimers.

The catalysed reaction is UDP-alpha-D-glucuronate + NAD(+) = UDP-beta-L-threo-pentopyranos-4-ulose + CO2 + NADH. It carries out the reaction UDP-4-amino-4-deoxy-beta-L-arabinose + (6R)-10-formyltetrahydrofolate = UDP-4-deoxy-4-formamido-beta-L-arabinose + (6S)-5,6,7,8-tetrahydrofolate + H(+). It participates in nucleotide-sugar biosynthesis; UDP-4-deoxy-4-formamido-beta-L-arabinose biosynthesis; UDP-4-deoxy-4-formamido-beta-L-arabinose from UDP-alpha-D-glucuronate: step 1/3. Its pathway is nucleotide-sugar biosynthesis; UDP-4-deoxy-4-formamido-beta-L-arabinose biosynthesis; UDP-4-deoxy-4-formamido-beta-L-arabinose from UDP-alpha-D-glucuronate: step 3/3. It functions in the pathway bacterial outer membrane biogenesis; lipopolysaccharide biosynthesis. Its function is as follows. Bifunctional enzyme that catalyzes the oxidative decarboxylation of UDP-glucuronic acid (UDP-GlcUA) to UDP-4-keto-arabinose (UDP-Ara4O) and the addition of a formyl group to UDP-4-amino-4-deoxy-L-arabinose (UDP-L-Ara4N) to form UDP-L-4-formamido-arabinose (UDP-L-Ara4FN). The modified arabinose is attached to lipid A and is required for resistance to polymyxin and cationic antimicrobial peptides. This Pseudomonas aeruginosa (strain ATCC 15692 / DSM 22644 / CIP 104116 / JCM 14847 / LMG 12228 / 1C / PRS 101 / PAO1) protein is Bifunctional polymyxin resistance protein ArnA.